We begin with the raw amino-acid sequence, 294 residues long: 4-hydroxy-tetrahydrodipicolinate synthase (294 aa).

Pyruvate is bound at residue Thr-44. Tyr-132 acts as the Proton donor/acceptor in catalysis. The active-site Schiff-base intermediate with substrate is Lys-160. Residue Val-202 coordinates pyruvate.

It belongs to the DapA family. In terms of assembly, homotetramer; dimer of dimers.

It localises to the cytoplasm. The catalysed reaction is L-aspartate 4-semialdehyde + pyruvate = (2S,4S)-4-hydroxy-2,3,4,5-tetrahydrodipicolinate + H2O + H(+). The protein operates within amino-acid biosynthesis; L-lysine biosynthesis via DAP pathway; (S)-tetrahydrodipicolinate from L-aspartate: step 3/4. Functionally, catalyzes the condensation of (S)-aspartate-beta-semialdehyde [(S)-ASA] and pyruvate to 4-hydroxy-tetrahydrodipicolinate (HTPA). This chain is 4-hydroxy-tetrahydrodipicolinate synthase, found in Leptospira borgpetersenii serovar Hardjo-bovis (strain L550).